We begin with the raw amino-acid sequence, 296 residues long: UDP-N-acetylenolpyruvoylglucosamine reductase (296 aa).

The FAD-binding PCMH-type domain maps to Arg-26–Ser-191. Residue Arg-170 is part of the active site. Catalysis depends on Cys-218, which acts as the Proton donor. The active site involves Glu-287.

This sequence belongs to the MurB family. FAD serves as cofactor.

Its subcellular location is the cytoplasm. It catalyses the reaction UDP-N-acetyl-alpha-D-muramate + NADP(+) = UDP-N-acetyl-3-O-(1-carboxyvinyl)-alpha-D-glucosamine + NADPH + H(+). It functions in the pathway cell wall biogenesis; peptidoglycan biosynthesis. Functionally, cell wall formation. The chain is UDP-N-acetylenolpyruvoylglucosamine reductase from Chlamydia felis (strain Fe/C-56) (Chlamydophila felis).